Reading from the N-terminus, the 1859-residue chain is Protein TIC 214 (1859 aa).

A run of 6 helical transmembrane segments spans residues 18-38 (IINS…FSIG), 64-84 (FITG…HLAL), 87-107 (PHTI…WNNH), 124-144 (LSIQ…HFIL), 172-192 (VGWL…LFWI), and 221-241 (IFSI…PAPI). Residues 247-314 (KETSKTEERG…TEEIRVNGKE (68 aa)) are disordered. Over residues 256-268 (GESEEERDVEIET) the composition is skewed to acidic residues. Residues 273–284 (KGTKQEQERSTE) are compositionally biased toward basic and acidic residues. Acidic residues predominate over residues 295 to 306 (EKEDPDKIDETE).

This sequence belongs to the TIC214 family. Part of the Tic complex.

It is found in the plastid. Its subcellular location is the chloroplast inner membrane. Functionally, involved in protein precursor import into chloroplasts. May be part of an intermediate translocation complex acting as a protein-conducting channel at the inner envelope. This Buxus microphylla (Littleleaf boxwood) protein is Protein TIC 214.